Reading from the N-terminus, the 2280-residue chain is Metacaspase-3 (2280 aa).

7 disordered regions span residues 56–83 (ILSKGKKNKNENIKKRINEKDNDTDRED), 202–284 (YSTE…THRG), 791–819 (YKNSMNSNDDIQNSNNNNNNNNNNNMVNN), 931–954 (DDNSVQDSFFSRTERSNSQNRYDK), 994–1015 (SGKYQRNIPQNDDNDHNDDDSE), 1278–1306 (KTNNKTNSNYSSNNNNDNNNNNNNSNPFI), and 1469–1500 (KAPTNVKAPTNVKAPTNVNAPTNVNAPTNANA). A compositionally biased stretch (basic and acidic residues) spans 63-83 (NKNENIKKRINEKDNDTDRED). Composition is skewed to polar residues over residues 205 to 219 (EHTQSIDNNNITSKR) and 228 to 278 (DKAQ…NRKG). Composition is skewed to low complexity over residues 793–819 (NSMNSNDDIQNSNNNNNNNNNNNMVNN) and 931–941 (DDNSVQDSFFS). Composition is skewed to low complexity over residues 1278-1303 (KTNNKTNSNYSSNNNNDNNNNNNNSN) and 1482-1500 (APTNVNAPTNVNAPTNANA).

It belongs to the peptidase C14B family.

In terms of biological role, protease that cleaves specifically after arginine or lysine residues. The sequence is that of Metacaspase-3 from Plasmodium falciparum (isolate 3D7).